Reading from the N-terminus, the 385-residue chain is Na(+)/H(+) antiporter NhaA (385 aa).

The next 11 helical transmembrane spans lie at 9 to 29 (YSAI…NVLD), 45 to 65 (IFGL…VFFF), 87 to 107 (IIPG…YLSV), 114 to 134 (GWPV…AIFG), 155 to 175 (AGIV…WIIV), 198 to 218 (TFLI…SVYQ), 220 to 235 (GIHA…IMLN), 245 to 265 (ALEP…AAMV), 282 to 302 (ILLG…IIAL), 312 to 332 (FFNL…SLLM), and 345 to 365 (QGVI…IILM).

The protein belongs to the NhaA Na(+)/H(+) (TC 2.A.33) antiporter family.

The protein localises to the cell membrane. It carries out the reaction Na(+)(in) + 2 H(+)(out) = Na(+)(out) + 2 H(+)(in). Na(+)/H(+) antiporter that extrudes sodium in exchange for external protons. This is Na(+)/H(+) antiporter NhaA from Tropheryma whipplei (strain Twist) (Whipple's bacillus).